The following is a 341-amino-acid chain: tRNA N6-adenosine threonylcarbamoyltransferase (341 aa).

The Fe cation site is built by His115 and His119. Substrate-binding positions include 137–141 (IVSGG), Asp170, Gly183, Asp187, and Asn276. Asp304 lines the Fe cation pocket.

It belongs to the KAE1 / TsaD family. Requires Fe(2+) as cofactor.

Its subcellular location is the cytoplasm. It carries out the reaction L-threonylcarbamoyladenylate + adenosine(37) in tRNA = N(6)-L-threonylcarbamoyladenosine(37) in tRNA + AMP + H(+). Functionally, required for the formation of a threonylcarbamoyl group on adenosine at position 37 (t(6)A37) in tRNAs that read codons beginning with adenine. Is involved in the transfer of the threonylcarbamoyl moiety of threonylcarbamoyl-AMP (TC-AMP) to the N6 group of A37, together with TsaE and TsaB. TsaD likely plays a direct catalytic role in this reaction. This is tRNA N6-adenosine threonylcarbamoyltransferase from Staphylococcus aureus (strain MRSA252).